The following is a 479-amino-acid chain: Poly(A) polymerase catalytic subunit (479 aa).

Residues Asp202 and Asp204 contribute to the active site. 3 residues coordinate Ca(2+): Asp202, Asp204, and Asp253.

Belongs to the poxviridae poly(A) polymerase catalytic subunit family. As to quaternary structure, heterodimer of a large (catalytic) subunit and a small (regulatory) subunit.

It catalyses the reaction RNA(n) + ATP = RNA(n)-3'-adenine ribonucleotide + diphosphate. Its function is as follows. Polymerase that creates the 3'-poly(A) tail of mRNA's. The protein is Poly(A) polymerase catalytic subunit (OPG063) of Camelus.